The primary structure comprises 561 residues: Carbohydrate sulfotransferase 15 (561 aa).

Residues 1–80 (MRHCINCCIQ…FLRFKKGKRC (80 aa)) lie on the Cytoplasmic side of the membrane. A helical; Signal-anchor for type II membrane protein membrane pass occupies residues 81 to 101 (SLVFGLIIMTLVMASYILSGA). The Lumenal segment spans residues 102–561 (HQELLISSPF…ADEAFAWKTT (460 aa)). Position 263–267 (263–267 (KCGTT)) interacts with 3'-phosphoadenylyl sulfate. Asn364 carries N-linked (GlcNAc...) asparagine glycosylation. 3'-phosphoadenylyl sulfate-binding residues include Arg392 and Ser400.

The protein belongs to the sulfotransferase 1 family. In terms of assembly, homodimer; disulfide-linked (Potential). The relevance of homodimerization is however unsure. May interact with phosphorylated proteins in resting B-cells, including HCK. Requires a divalent metal cation as cofactor. The cofactor is glutathione. Post-translationally, glycosylated. As to expression, expressed in B-cell-enriched tissues but not in fetal or adult thymus. Expressed in fetal and adult spleen, lymph node, tonsil, bone marrow and peripheral leukocytes. Not expressed in T-cells. In pro-B, pre-B, and mature B-cell lines, it colocalizes with RAG1.

It localises to the golgi apparatus membrane. The catalysed reaction is dermatan 4'-sulfate + n 3'-phosphoadenylyl sulfate = dermatan 4',6'-bissulfate + n adenosine 3',5'-bisphosphate + n H(+). It carries out the reaction chondroitin 4'-sulfate + n 3'-phosphoadenylyl sulfate = chondroitin 4',6'-bissulfate + n adenosine 3',5'-bisphosphate + n H(+). Inhibited by phenyl beta-GalNAc(4,6-SO(4)). Sulfotransferase that transfers sulfate from 3'-phosphoadenosine 5'-phosphosulfate (PAPS) to the C-6 hydroxyl group of the GalNAc 4-sulfate residue of chondroitin sulfate A and forms chondroitin sulfate E containing GlcA-GalNAc(4,6-SO(4)) repeating units. It also transfers sulfate to a unique non-reducing terminal sequence, GalNAc(4SO4)-GlcA(2SO4)-GalNAc(6SO4), to yield a highly sulfated structure similar to the structure found in thrombomodulin chondroitin sulfate. May also act as a B-cell receptor involved in BCR ligation-mediated early activation that mediate regulatory signals key to B-cell development and/or regulation of B-cell-specific RAG expression; however such results are unclear in vivo. This is Carbohydrate sulfotransferase 15 (CHST15) from Homo sapiens (Human).